The following is a 120-amino-acid chain: NAD(P)H-quinone oxidoreductase subunit 3 (120 aa).

The next 3 helical transmembrane spans lie at 10–30 (LLVF…ASAL), 64–84 (MFAL…PWAV), and 89–109 (LGLL…VGLV).

This sequence belongs to the complex I subunit 3 family. NDH-1 can be composed of about 15 different subunits; different subcomplexes with different compositions have been identified which probably have different functions.

The protein resides in the cellular thylakoid membrane. The enzyme catalyses a plastoquinone + NADH + (n+1) H(+)(in) = a plastoquinol + NAD(+) + n H(+)(out). The catalysed reaction is a plastoquinone + NADPH + (n+1) H(+)(in) = a plastoquinol + NADP(+) + n H(+)(out). In terms of biological role, NDH-1 shuttles electrons from an unknown electron donor, via FMN and iron-sulfur (Fe-S) centers, to quinones in the respiratory and/or the photosynthetic chain. The immediate electron acceptor for the enzyme in this species is believed to be plastoquinone. Couples the redox reaction to proton translocation, and thus conserves the redox energy in a proton gradient. Cyanobacterial NDH-1 also plays a role in inorganic carbon-concentration. This is NAD(P)H-quinone oxidoreductase subunit 3 from Synechococcus sp. (strain JA-2-3B'a(2-13)) (Cyanobacteria bacterium Yellowstone B-Prime).